The primary structure comprises 54 residues: MLNKRGVPCRCESDGPPRQNNALSGTTFYVVGCNKAGWNKCRYINAISTCCKEG.

A signal peptide spans 1-7 (MLNKRGV). Disulfide bonds link cysteine 9-cysteine 50, cysteine 11-cysteine 41, and cysteine 33-cysteine 51. Glutamate 53 is subject to Glutamic acid 1-amide.

Belongs to the sea anemone sodium channel inhibitory toxin family. Type I subfamily. Contains 3 disulfide bonds.

It localises to the secreted. The protein localises to the nematocyst. Functionally, in vivo, induces marked paralysis on shrimps (C.multidentata) at 10-20 seconds after injection and a weak toxicity when injected into insect larvae (M.domestica). This chain is Toxin AnmTx Cj 1c-1, found in Epiactis japonica (Sea anemone).